The chain runs to 327 residues: E3 ubiquitin ligase Rnf121 (327 aa).

At A2 the chain carries N-acetylalanine. The next 5 membrane-spanning stretches (helical) occupy residues M50–V70, S79–L99, H100–F120, A148–F168, and P172–L192. An RING-type; atypical zinc finger spans residues C226–K276. Residues L306–L326 form a helical membrane-spanning segment.

It belongs to the RNF121 family.

The protein resides in the endoplasmic reticulum membrane. The catalysed reaction is S-ubiquitinyl-[E2 ubiquitin-conjugating enzyme]-L-cysteine + [acceptor protein]-L-lysine = [E2 ubiquitin-conjugating enzyme]-L-cysteine + N(6)-ubiquitinyl-[acceptor protein]-L-lysine.. It participates in protein modification; protein ubiquitination. In terms of biological role, E3 ubiquitin ligase which accepts ubiquitin and transfers it to substrates thereby promoting their degradation by the endoplasmic reticulum-associated degradation (ERAD) pathway which is a pathway involved in ubiquitin-dependent degradation of misfolded endoplasmic reticulum proteins. May regulate the unfolded protein response to reduce endoplasmic reticulum stress. The polypeptide is E3 ubiquitin ligase Rnf121 (Rnf121) (Mus musculus (Mouse)).